The sequence spans 954 residues: E3 ubiquitin-protein ligase arkadia (954 aa).

Positions 50 to 66 (LCSDTNKQQRDLNSNGT) are enriched in polar residues. 2 disordered regions span residues 50-175 (LCSD…VSSL) and 193-276 (RKRF…SGGM). Low complexity-rich tracts occupy residues 112 to 131 (SSFSDCISSPSSSSHFGDSD) and 232 to 251 (SSSSSSENDLSSESSSSSST). Residues 280–284 (VVVIE) carry the SUMO interaction motif 1 (SIM) motif. Residues 305–311 (EVEIVTV) carry the SUMO interaction motif 2 (SIM) motif. Disordered regions lie at residues 318–346 (RTTLGHPRSHWGQNTQSGRTQEQRTRNRV), 364–452 (TVDE…MPRL), and 485–509 (HFPHHHHHHHQSSHPGVPLSPSFRD). Polar residues predominate over residues 328 to 337 (WGQNTQSGRT). Positions 360–364 (VVDLT) match the SUMO interaction motif 3 (SIM) motif. Over residues 385 to 395 (VSTVSSNTSTS) the composition is skewed to low complexity. Positions 485–496 (HFPHHHHHHHQS) are enriched in basic residues. Residues 867–869 (YPH) form a ubiquitin binding region. The Zn(2+) site is built by cysteine 902 and cysteine 905. The RING-type; atypical zinc-finger motif lies at 902–943 (CTICLSILEEGEDVRRLPCMHLFHQVCVDQWLITNKKCPICR). Residues 917 to 921 (RLPCM) form a ubiquitin binding region. Histidine 925 and cysteine 928 together coordinate Zn(2+).

This sequence belongs to the Arkadia family. Monomer.

Its subcellular location is the nucleus. The protein localises to the cytoplasm. It is found in the PML body. The enzyme catalyses S-ubiquitinyl-[E2 ubiquitin-conjugating enzyme]-L-cysteine + [acceptor protein]-L-lysine = [E2 ubiquitin-conjugating enzyme]-L-cysteine + N(6)-ubiquitinyl-[acceptor protein]-L-lysine.. It functions in the pathway protein modification; protein ubiquitination. Binds free ubiquitin non-covalently via its RING-type zinc finger. Ubiquitin-binding leads to enhance the E3 ubiquitin-protein ligase activity by stabilizing the ubiquitin-conjugating enzyme E2 (donor ubiquitin) in the 'closed' conformation and activating ubiquitin transfer. In terms of biological role, E3 ubiquitin-protein ligase required for mesoderm patterning during embryonic development. Acts as an enhancer of the transcriptional responses of the smad2/smad3 effectors, which are activated downstream of BMP. Acts by mediating ubiquitination and degradation of SMAD inhibitors such as smad7, inducing their proteasomal degradation and thereby enhancing the transcriptional activity of TGF-beta and BMP. Specifically binds polysumoylated chains via SUMO interaction motifs (SIMs) and mediates ubiquitination of sumoylated substrates. The regulation of the BMP-SMAD signaling is however independent of sumoylation and is not dependent of SUMO interaction motifs (SIMs). The sequence is that of E3 ubiquitin-protein ligase arkadia (rnf111) from Xenopus tropicalis (Western clawed frog).